The following is a 1028-amino-acid chain: MFTASPMSLSKILARRDWENPGVTQWHRLPAHAPFNSWRDEASARADDNASRKRSLNGDWQFSYYAAPEQVPDSWVTEDCADAVTTPVPSNWQMQGFDTPIYTNVTYPIPVNPPFVPAENPTGCYSLTFEVDEQWLESGQTRIVFDGVNSAFYLWCNGKWMGYSQDSRLPAEFDLSAVLRPGTNRLAVLVLRWCDGSYLEDQDMWRMSGIFRDVSLLHKPHTHIADYHAVTELNADYDRAKLQVEVALAGEQFADCEVTVTLWRDGLSVATASAKPGSAIIDERGNWAERLNVTLPVNDPALWSAETPELYRLTFALRDGQGEILDVEACDVGFRCVEISNGLLKVNGKPLLIRGVNRHEHHPENGQVMDEATMRRDIELMKQHNFNAVRCSHYPNHPLWYTLCDRYGLYVVDEANIETHGMVPMSRLADDPRWLPAMSERVTRMVLRDRNHPSIIIWSLGNESGHGANHDALYRWVKTTDPTRPVQYEGGGANTAATDIVCPMYARVDQDQPFEAVPKWSLKKWIGMPDETRPLILCEYAHAMGNSFGGFAKYWQAFRNHPRLQGGFVWDWVDQALTKKDDNGNAFWAYGGDFGDTPNDRQFCLNGLVFPDRTPHPALFEAQRAQQFFNFTLVSTSPLVIDVHSDYLFRQCDNEQLRWNIARDGEVLASGEVALTIAPQQTQRIEIDAPEFAAAAGEIWLNVDIVQTAATAWSPADHRCAWDQWQLPAPLYIAPPVEGTAKPDLKVKEDVLEVSHQSQRWHFDRASGNLTQWWNNGTATLLAPLNDNFTRAPLDNDIGVSEATRIDPNAWVERWKAAGMYNLTPRLLLCEGEQLAQAVTITTLHAWESNGKALFLSRKVWKIDRAGVLHGDVQVQVANDIPQPARIGLSCQLAQTPQTASWLGLGPDENYPDRKLAARQGRWTLPLDALHTAYIFPTDNGLRCDTRELTFDTHQLQGDFHFSLSRYSQQQLRDTSHHHLLEAEPGCWLNIDAFHMGVGGDDSWSPSVSPEFILQRREMRYAFSWRQD.

Asn104 and Asp203 together coordinate substrate. Asp203 serves as a coordination point for Na(+). Mg(2+) is bound by residues Glu418, His420, and Glu463. Substrate-binding positions include Glu463 and 539 to 542 (EYAH). Glu463 acts as the Proton donor in catalysis. The active-site Nucleophile is the Glu539. Asn599 lines the Mg(2+) pocket. The Na(+) site is built by Phe603 and Asn606. Residues Asn606 and Trp1004 each contribute to the substrate site.

This sequence belongs to the glycosyl hydrolase 2 family. In terms of assembly, homotetramer. The cofactor is Mg(2+). It depends on Na(+) as a cofactor.

It catalyses the reaction Hydrolysis of terminal non-reducing beta-D-galactose residues in beta-D-galactosides.. The sequence is that of Beta-galactosidase from Enterobacter sp. (strain 638).